The chain runs to 170 residues: MDQIFNKVGSYWLGQKANKQFDSVGNDLNSVSTSIEGGTKWLVNKIKGKMQKPLPELLKEYDLPIGIFPGDATNYEFDEETKKLTVLIPSICEVGYKDSSVLKFTTTVTGHLEKGKLTDVEGIKTKVMIWVKVTSISTDASKVYFTAGMKKSRSRDAYEVQRNGLRVDKF.

This is an uncharacterized protein from Arabidopsis thaliana (Mouse-ear cress).